The following is a 420-amino-acid chain: Glucose-1-phosphate adenylyltransferase (420 aa).

Residues Y107, G173, 188-189, and S206 contribute to the alpha-D-glucose 1-phosphate site; that span reads EK.

It belongs to the bacterial/plant glucose-1-phosphate adenylyltransferase family. As to quaternary structure, homotetramer.

The catalysed reaction is alpha-D-glucose 1-phosphate + ATP + H(+) = ADP-alpha-D-glucose + diphosphate. It functions in the pathway glycan biosynthesis; glycogen biosynthesis. Its function is as follows. Involved in the biosynthesis of ADP-glucose, a building block required for the elongation reactions to produce glycogen. Catalyzes the reaction between ATP and alpha-D-glucose 1-phosphate (G1P) to produce pyrophosphate and ADP-Glc. The polypeptide is Glucose-1-phosphate adenylyltransferase (Shewanella oneidensis (strain ATCC 700550 / JCM 31522 / CIP 106686 / LMG 19005 / NCIMB 14063 / MR-1)).